The following is a 241-amino-acid chain: DNA repair protein RecO (241 aa).

It belongs to the RecO family.

Involved in DNA repair and RecF pathway recombination. The chain is DNA repair protein RecO from Roseobacter denitrificans (strain ATCC 33942 / OCh 114) (Erythrobacter sp. (strain OCh 114)).